A 716-amino-acid polypeptide reads, in one-letter code: Fatty acid oxidation complex subunit alpha (716 aa).

The enoyl-CoA hydratase/isomerase stretch occupies residues 1–189 (MIYQSPTIQV…KVGAVDAVVA (189 aa)). A substrate-binding site is contributed by Asp-296. A 3-hydroxyacyl-CoA dehydrogenase region spans residues 311 to 716 (KDVKSAAVLG…AANNGSYYQA (406 aa)). Residues Met-324, Asp-343, 400–402 (VVE), Lys-407, and Ser-429 each bind NAD(+). His-450 acts as the For 3-hydroxyacyl-CoA dehydrogenase activity in catalysis. Asn-453 provides a ligand contact to NAD(+). The substrate site is built by Asn-500 and Tyr-660.

The protein in the N-terminal section; belongs to the enoyl-CoA hydratase/isomerase family. This sequence in the C-terminal section; belongs to the 3-hydroxyacyl-CoA dehydrogenase family. In terms of assembly, heterotetramer of two alpha chains (FadB) and two beta chains (FadA).

It carries out the reaction a (3S)-3-hydroxyacyl-CoA + NAD(+) = a 3-oxoacyl-CoA + NADH + H(+). The enzyme catalyses a (3S)-3-hydroxyacyl-CoA = a (2E)-enoyl-CoA + H2O. It catalyses the reaction a 4-saturated-(3S)-3-hydroxyacyl-CoA = a (3E)-enoyl-CoA + H2O. The catalysed reaction is (3S)-3-hydroxybutanoyl-CoA = (3R)-3-hydroxybutanoyl-CoA. It carries out the reaction a (3Z)-enoyl-CoA = a 4-saturated (2E)-enoyl-CoA. The enzyme catalyses a (3E)-enoyl-CoA = a 4-saturated (2E)-enoyl-CoA. The protein operates within lipid metabolism; fatty acid beta-oxidation. Its function is as follows. Involved in the aerobic and anaerobic degradation of long-chain fatty acids via beta-oxidation cycle. Catalyzes the formation of 3-oxoacyl-CoA from enoyl-CoA via L-3-hydroxyacyl-CoA. It can also use D-3-hydroxyacyl-CoA and cis-3-enoyl-CoA as substrate. The chain is Fatty acid oxidation complex subunit alpha from Shewanella sp. (strain ANA-3).